Reading from the N-terminus, the 2099-residue chain is Dedicator of cytokinesis protein 8 (2099 aa).

Ser-20, Ser-139, and Ser-451 each carry phosphoserine. One can recognise a C2 DOCK-type domain in the interval 560–729; that stretch reads RNLLYVYPQR…GVFNIEVQAV (170 aa). Phosphoserine is present on residues Ser-904, Ser-936, Ser-1145, and Ser-1243. The DOCKER domain maps to 1632–2066; sequence KSYQASPDLR…LRPMIERKIP (435 aa). The residue at position 2087 (Ser-2087) is a Phosphoserine.

This sequence belongs to the DOCK family. Interacts (via DOCKER domain) with GTPase CDC42; the interaction activates CDC42 by exchanging GDP for GTP. The unphosphorylated form interacts (via DOCKER domain) with LRCH1 (via LRR repeats); the interaction prevents the association between DOCK8 and CDC42. Interacts with CCDC88B. In terms of processing, in response to chemokine CXCL12/SDF-1-alpha stimulation, phosphorylated by PRKCA/PKC-alpha which promotes DOCK8 dissociation from LRCH1. As to expression, expressed in peripheral blood mononuclear cells (PBMCs).

The protein resides in the cytoplasm. Its subcellular location is the cell membrane. It is found in the cell projection. It localises to the lamellipodium membrane. In terms of biological role, guanine nucleotide exchange factor (GEF) which specifically activates small GTPase CDC42 by exchanging bound GDP for free GTP. During immune responses, required for interstitial dendritic cell (DC) migration by locally activating CDC42 at the leading edge membrane of DC. Required for CD4(+) T-cell migration in response to chemokine stimulation by promoting CDC42 activation at T cell leading edge membrane. Is involved in NK cell cytotoxicity by controlling polarization of microtubule-organizing center (MTOC), and possibly regulating CCDC88B-mediated lytic granule transport to MTOC during cell killing. In Homo sapiens (Human), this protein is Dedicator of cytokinesis protein 8 (DOCK8).